The primary structure comprises 300 residues: ADP-polyphosphate phosphotransferase 1 (300 aa).

This sequence belongs to the polyphosphate kinase 2 (PPK2) family. Class I subfamily. In terms of assembly, homotetramer. It depends on Mg(2+) as a cofactor.

It catalyses the reaction [phosphate](n) + ATP = [phosphate](n+1) + ADP. It carries out the reaction [phosphate](n) + GTP = [phosphate](n+1) + GDP. Uses inorganic polyphosphate (polyP) as a donor to convert ADP to ATP. Can also convert GDP to GTP, with lower efficiency. Cannot dephosphorylate ATP in the presence of polyP. This chain is ADP-polyphosphate phosphotransferase 1, found in Rhizobium meliloti (strain 1021) (Ensifer meliloti).